A 115-amino-acid polypeptide reads, in one-letter code: NADH-ubiquinone oxidoreductase chain 3 (115 aa).

A run of 3 helical transmembrane segments spans residues 3-23, 55-75, and 87-107; these read IMIT…IAFW, FFLV…LLPL, and MLTT…YEWL.

Belongs to the complex I subunit 3 family. As to quaternary structure, core subunit of respiratory chain NADH dehydrogenase (Complex I) which is composed of 45 different subunits. Interacts with TMEM186. Interacts with TMEM242.

The protein localises to the mitochondrion inner membrane. It carries out the reaction a ubiquinone + NADH + 5 H(+)(in) = a ubiquinol + NAD(+) + 4 H(+)(out). Its function is as follows. Core subunit of the mitochondrial membrane respiratory chain NADH dehydrogenase (Complex I) which catalyzes electron transfer from NADH through the respiratory chain, using ubiquinone as an electron acceptor. Essential for the catalytic activity of complex I. The polypeptide is NADH-ubiquinone oxidoreductase chain 3 (Dasypus novemcinctus (Nine-banded armadillo)).